A 263-amino-acid chain; its full sequence is Thymidylate synthase (263 aa).

Residues arginine 25 and 123–124 (RR) contribute to the dUMP site. Cysteine 143 acts as the Nucleophile in catalysis. DUMP contacts are provided by residues 163–166 (RSGD), asparagine 174, and 204–206 (HIY). Residue aspartate 166 participates in (6R)-5,10-methylene-5,6,7,8-tetrahydrofolate binding. Residue serine 262 coordinates (6R)-5,10-methylene-5,6,7,8-tetrahydrofolate.

Belongs to the thymidylate synthase family. Bacterial-type ThyA subfamily. In terms of assembly, homodimer.

It is found in the cytoplasm. It carries out the reaction dUMP + (6R)-5,10-methylene-5,6,7,8-tetrahydrofolate = 7,8-dihydrofolate + dTMP. It participates in pyrimidine metabolism; dTTP biosynthesis. In terms of biological role, catalyzes the reductive methylation of 2'-deoxyuridine-5'-monophosphate (dUMP) to 2'-deoxythymidine-5'-monophosphate (dTMP) while utilizing 5,10-methylenetetrahydrofolate (mTHF) as the methyl donor and reductant in the reaction, yielding dihydrofolate (DHF) as a by-product. This enzymatic reaction provides an intracellular de novo source of dTMP, an essential precursor for DNA biosynthesis. The polypeptide is Thymidylate synthase (Clostridium beijerinckii (strain ATCC 51743 / NCIMB 8052) (Clostridium acetobutylicum)).